Consider the following 294-residue polypeptide: Phosphatidylglycerol--prolipoprotein diacylglyceryl transferase (294 aa).

A run of 7 helical transmembrane segments spans residues 21-41, 60-80, 96-116, 124-144, 199-219, 226-246, and 259-279; these read VSLH…LWLA, LLYV…VLFY, WDGG…MIWF, FFQV…LGRI, SQLY…NIFV, GSVS…VEFF, and ISMG…FMVW. An a 1,2-diacyl-sn-glycero-3-phospho-(1'-sn-glycerol)-binding site is contributed by Arg-143.

The protein belongs to the Lgt family.

It localises to the cell inner membrane. It carries out the reaction L-cysteinyl-[prolipoprotein] + a 1,2-diacyl-sn-glycero-3-phospho-(1'-sn-glycerol) = an S-1,2-diacyl-sn-glyceryl-L-cysteinyl-[prolipoprotein] + sn-glycerol 1-phosphate + H(+). The protein operates within protein modification; lipoprotein biosynthesis (diacylglyceryl transfer). Its function is as follows. Catalyzes the transfer of the diacylglyceryl group from phosphatidylglycerol to the sulfhydryl group of the N-terminal cysteine of a prolipoprotein, the first step in the formation of mature lipoproteins. The sequence is that of Phosphatidylglycerol--prolipoprotein diacylglyceryl transferase from Proteus mirabilis (strain HI4320).